A 683-amino-acid chain; its full sequence is ATP-dependent zinc metalloprotease FtsH (683 aa).

Positions 1 to 43 (MEDKNIKDDEILDDQNDNQEDVQNQDEEKEIKPKKPKKKVYIS) are disordered. Residues 1–70 (MEDKNIKDDE…KNNNISFRVK (70 aa)) are Cytoplasmic-facing. The segment covering 10 to 28 (EILDDQNDNQEDVQNQDEE) has biased composition (acidic residues). Residues 71 to 91 (PPIFFFLILILMSTLFYFYGN) traverse the membrane as a helical segment. Residues 92–174 (KTALFQEKRE…IVVLGTPVSS (83 aa)) lie on the Periplasmic side of the membrane. Residues 175–195 (IITRAIFSFAPLFMLLFFFYF) form a helical membrane-spanning segment. Residues 196-683 (INKKMMGSSG…LDDEQLEKYY (488 aa)) lie on the Cytoplasmic side of the membrane. Residue 270–277 (GEPGTGKT) coordinates ATP. His-494 is a Zn(2+) binding site. Glu-495 is an active-site residue. Zn(2+) contacts are provided by His-498 and Asp-569.

It in the central section; belongs to the AAA ATPase family. In the C-terminal section; belongs to the peptidase M41 family. As to quaternary structure, homohexamer. It depends on Zn(2+) as a cofactor.

Its subcellular location is the cell inner membrane. Acts as a processive, ATP-dependent zinc metallopeptidase for both cytoplasmic and membrane proteins. Plays a role in the quality control of integral membrane proteins. This Streptobacillus moniliformis (strain ATCC 14647 / DSM 12112 / NCTC 10651 / 9901) protein is ATP-dependent zinc metalloprotease FtsH.